Reading from the N-terminus, the 312-residue chain is Beta-lactamase regulatory protein BlaB (312 aa).

The polypeptide is Beta-lactamase regulatory protein BlaB (blaB) (Streptomyces cacaoi).